Reading from the N-terminus, the 65-residue chain is MAKKGTRIVVTLECTESRSVPSSEKRSAGVSRYTTEKNRRNTTERLELKKFCPELNKMTIHREIK.

The disordered stretch occupies residues 17–40 (SRSVPSSEKRSAGVSRYTTEKNRR).

It belongs to the bacterial ribosomal protein bL33 family.

In Prochlorococcus marinus (strain NATL1A), this protein is Large ribosomal subunit protein bL33.